The primary structure comprises 363 residues: UDP-N-acetylglucosamine--N-acetylmuramyl-(pentapeptide) pyrophosphoryl-undecaprenol N-acetylglucosamine transferase (363 aa).

UDP-N-acetyl-alpha-D-glucosamine contacts are provided by residues 14–16 (TGG), Asn-122, Arg-163, Ser-190, and Gln-285.

It belongs to the glycosyltransferase 28 family. MurG subfamily.

It localises to the cell inner membrane. The catalysed reaction is di-trans,octa-cis-undecaprenyl diphospho-N-acetyl-alpha-D-muramoyl-L-alanyl-D-glutamyl-meso-2,6-diaminopimeloyl-D-alanyl-D-alanine + UDP-N-acetyl-alpha-D-glucosamine = di-trans,octa-cis-undecaprenyl diphospho-[N-acetyl-alpha-D-glucosaminyl-(1-&gt;4)]-N-acetyl-alpha-D-muramoyl-L-alanyl-D-glutamyl-meso-2,6-diaminopimeloyl-D-alanyl-D-alanine + UDP + H(+). Its pathway is cell wall biogenesis; peptidoglycan biosynthesis. Its function is as follows. Cell wall formation. Catalyzes the transfer of a GlcNAc subunit on undecaprenyl-pyrophosphoryl-MurNAc-pentapeptide (lipid intermediate I) to form undecaprenyl-pyrophosphoryl-MurNAc-(pentapeptide)GlcNAc (lipid intermediate II). The sequence is that of UDP-N-acetylglucosamine--N-acetylmuramyl-(pentapeptide) pyrophosphoryl-undecaprenol N-acetylglucosamine transferase from Prochlorococcus marinus (strain AS9601).